The primary structure comprises 627 residues: Siderophore iron transporter ARN1 (627 aa).

The Extracellular segment spans residues 1-70 (MESVHSRDPV…TEIIGSAYNK (70 aa)). A helical transmembrane segment spans residues 71 to 91 (WYLQAILLLSAFICGYGYGLD). Topologically, residues 92–110 (GNIRYIYTGYATSSYSEHS) are cytoplasmic. A helical membrane pass occupies residues 111–131 (LLSTINVINAVVSAASQIIYA). The Extracellular portion of the chain corresponds to 132 to 135 (RLSD). Residues 136–156 (VFGRLYLFISAVILYVVGTII) form a helical membrane-spanning segment. Topologically, residues 157 to 167 (QSQAYDVQRYA) are cytoplasmic. The chain crosses the membrane as a helical span at residues 168–188 (AGAIFYNAGYVGVILILLIIL). The Extracellular segment spans residues 189–197 (SDFSSLKWR). The helical transmembrane segment at 198 to 218 (LLYQFVPTWPFIINTWIAGNI) threads the bilayer. At 219-231 (TSRANPVVNWSWD) the chain is on the cytoplasmic side. Residues 232 to 252 (VGMWAFIFPLSCVPIVLCMLH) form a helical membrane-spanning segment. At 253-290 (MQWRARKTPEWHALKGQKSYYQEHGFIKILKQLFWMLD) the chain is on the extracellular side. The chain crosses the membrane as a helical span at residues 291–311 (VVGVLLMGCSLGCILVPLTLA). The Cytoplasmic portion of the chain corresponds to 312-323 (GGVKTTWNDSRL). A helical transmembrane segment spans residues 324–344 (IGPFVLGFVLIPILWIWEYRF). Topologically, residues 345–367 (ARDPILPYRLVKDRAVWSSMGIS) are extracellular. A helical membrane pass occupies residues 368–388 (FLIDFIYYMAADYLYTVMIVA). At 389–398 (VNESVKSATR) the chain is on the cytoplasmic side. The helical transmembrane segment at 399-419 (IATLSSFVSTVASPFFALLVT) threads the bilayer. The Extracellular segment spans residues 420-424 (RCTRL). Residues 425 to 445 (KPFIMFGCALWMVAMGLLYHF) traverse the membrane as a helical segment. At 446–454 (RGGSQSHSG) the chain is on the cytoplasmic side. The chain crosses the membrane as a helical span at residues 455–475 (IIGALCVWGVGTTLFTYPVTV). Over 476-563 (SVQSAVSHEN…LMNAYKYVQR (88 aa)) the chain is Extracellular. A helical transmembrane segment spans residues 564–584 (LETIVALVFCVPLIAFSLCLR). The Cytoplasmic portion of the chain corresponds to 585–627 (DPKLTDTVAVEYIEDGEYVDTKDNDPILDWFEKLPSKFTFKRE).

Belongs to the major facilitator superfamily.

The protein resides in the cell membrane. It is found in the endosome membrane. Its function is as follows. Involved in the transport of siderophore ferrichrome and so has a role in iron homeostasis. This is Siderophore iron transporter ARN1 (ARN1) from Saccharomyces cerevisiae (strain ATCC 204508 / S288c) (Baker's yeast).